We begin with the raw amino-acid sequence, 534 residues long: UDP-glucuronosyltransferase 2A3 (534 aa).

Positions 1–18 are cleaved as a signal peptide; the sequence is MVSEKCVAAFFLLQLCWA. The Extracellular segment spans residues 19-493; sequence GCGFCSKVLV…SWFQYHSLDV (475 aa). The N-linked (GlcNAc...) asparagine glycan is linked to Asn-102. Lys-135 is modified (N6-succinyllysine). An N-linked (GlcNAc...) asparagine glycan is attached at Asn-204. A helical membrane pass occupies residues 494 to 514; the sequence is IGFLLLCVVTLTFIITKFCLF. The Cytoplasmic segment spans residues 515 to 534; the sequence is VCQKLYMKESKKMGNRKKKN.

The protein belongs to the UDP-glycosyltransferase family. Highly expressed in liver, with lower levels in duodenum and jejunum.

It is found in the membrane. It catalyses the reaction glucuronate acceptor + UDP-alpha-D-glucuronate = acceptor beta-D-glucuronoside + UDP + H(+). Functionally, UDP-glucuronosyltransferases catalyze phase II biotransformation reactions in which lipophilic substrates are conjugated with glucuronic acid to increase water solubility and enhance excretion. They are of major importance in the conjugation and subsequent elimination of potentially toxic xenobiotics and endogenous compounds. This Mus musculus (Mouse) protein is UDP-glucuronosyltransferase 2A3 (Ugt2a3).